Here is a 231-residue protein sequence, read N- to C-terminus: Orotidine 5'-phosphate decarboxylase (231 aa).

Substrate is bound by residues aspartate 11, lysine 33, 60–69, threonine 120, arginine 181, glutamine 190, glycine 210, and arginine 211; that span reads DLKFHDIPNT. The active-site Proton donor is the lysine 62.

The protein belongs to the OMP decarboxylase family. Type 1 subfamily. In terms of assembly, homodimer.

The catalysed reaction is orotidine 5'-phosphate + H(+) = UMP + CO2. It functions in the pathway pyrimidine metabolism; UMP biosynthesis via de novo pathway; UMP from orotate: step 2/2. Its function is as follows. Catalyzes the decarboxylation of orotidine 5'-monophosphate (OMP) to uridine 5'-monophosphate (UMP). The polypeptide is Orotidine 5'-phosphate decarboxylase (Vibrio atlanticus (strain LGP32) (Vibrio splendidus (strain Mel32))).